The following is a 469-amino-acid chain: 3-isopropylmalate dehydratase large subunit (469 aa).

Positions 347, 407, and 410 each coordinate [4Fe-4S] cluster.

It belongs to the aconitase/IPM isomerase family. LeuC type 1 subfamily. Heterodimer of LeuC and LeuD. The cofactor is [4Fe-4S] cluster.

It carries out the reaction (2R,3S)-3-isopropylmalate = (2S)-2-isopropylmalate. It participates in amino-acid biosynthesis; L-leucine biosynthesis; L-leucine from 3-methyl-2-oxobutanoate: step 2/4. Catalyzes the isomerization between 2-isopropylmalate and 3-isopropylmalate, via the formation of 2-isopropylmaleate. In Synechococcus sp. (strain RCC307), this protein is 3-isopropylmalate dehydratase large subunit.